The following is a 341-amino-acid chain: UDP-glucose 4-epimerase (341 aa).

Belongs to the polysaccharide synthase family.

The enzyme catalyses UDP-alpha-D-glucose = UDP-alpha-D-galactose. Epimerizes UDP-galactose to UDP-glucose. The sequence is that of UDP-glucose 4-epimerase (capD) from Rickettsia canadensis (strain McKiel).